The primary structure comprises 913 residues: DNA mismatch repair protein MutS (913 aa).

Residue 720-727 (GPNASGKS) coordinates ATP.

This sequence belongs to the DNA mismatch repair MutS family.

Its function is as follows. This protein is involved in the repair of mismatches in DNA. It is possible that it carries out the mismatch recognition step. This protein has a weak ATPase activity. This is DNA mismatch repair protein MutS from Prochlorococcus marinus (strain AS9601).